Reading from the N-terminus, the 129-residue chain is uncharacterized protein (129 aa).

The first 17 residues, 1-17 (MCPECFFLMLFFCGYRA), serve as a signal peptide directing secretion. Residues 26–36 (SSSSSSSFRSS) are compositionally biased toward low complexity. The disordered stretch occupies residues 26–76 (SSSSSSSFRSSPAYGFSGRPPGGAGCRERSQRSCLRPGGLPSLTRNPGLQR).

This is an uncharacterized protein from Escherichia coli O157:H7.